The chain runs to 315 residues: tRNA dimethylallyltransferase (315 aa).

14–21 serves as a coordination point for ATP; the sequence is GPTASGKT. A substrate-binding site is contributed by 16 to 21; the sequence is TASGKT. 3 interaction with substrate tRNA regions span residues 39–42, 163–167, and 248–253; these read DSAL, QRIQR, and RCVGYR.

The protein belongs to the IPP transferase family. Monomer. It depends on Mg(2+) as a cofactor.

The catalysed reaction is adenosine(37) in tRNA + dimethylallyl diphosphate = N(6)-dimethylallyladenosine(37) in tRNA + diphosphate. Functionally, catalyzes the transfer of a dimethylallyl group onto the adenine at position 37 in tRNAs that read codons beginning with uridine, leading to the formation of N6-(dimethylallyl)adenosine (i(6)A). The sequence is that of tRNA dimethylallyltransferase from Paraburkholderia phytofirmans (strain DSM 17436 / LMG 22146 / PsJN) (Burkholderia phytofirmans).